The following is a 387-amino-acid chain: Decapping nuclease RAI1 (387 aa).

Glu172 provides a ligand contact to a divalent metal cation. Ser198 is subject to Phosphoserine. Residue Glu221 participates in substrate binding. Positions 223, 241, and 242 each coordinate a divalent metal cation. Substrate is bound by residues Lys243 and Gln267. The segment at Ile273–Lys387 is interaction with RAT1.

The protein belongs to the DXO/Dom3Z family. As to quaternary structure, interacts with RAT1, RTT103 and pre-60S ribosomal subunits. Interacts with RAT1; the interaction is direct, stabilizes RAT1 protein structure and stimulates its exoribonuclease activity. The interaction also stimulates RAI1 pyrophosphohydrolase activity, probably by recruiting it to mRNA substrates. It depends on a divalent metal cation as a cofactor.

The protein resides in the nucleus. It catalyses the reaction a 5'-end NAD(+)-phospho-ribonucleoside in mRNA + H2O = a 5'-end phospho-ribonucleoside in mRNA + NAD(+) + H(+). It carries out the reaction a 5'-end (N(7)-methyl 5'-triphosphoguanosine)-ribonucleoside-ribonucleotide in mRNA + H2O = a (N(7)-methyl 5'-triphosphoguanosine)-nucleoside + a 5'-end phospho-ribonucleoside in mRNA + H(+). The enzyme catalyses a 5'-end triphospho-ribonucleoside in mRNA + H2O = a 5'-end phospho-ribonucleoside in mRNA + diphosphate + H(+). Decapping enzyme for NAD-capped RNAs: specifically hydrolyzes the nicotinamide adenine dinucleotide (NAD) cap from a subset of RNAs by removing the entire NAD moiety from the 5'-end of an NAD-capped RNA. The NAD-cap is present at the 5'-end of some RNAs and snoRNAs. In contrast to the canonical 5'-end N7 methylguanosine (m7G) cap, the NAD cap promotes mRNA decay. Also acts as a non-canonical decapping enzyme that removes the entire cap structure of m7G capped or incompletely capped RNAs. Has decapping activity toward incomplete 5'-end m7G cap mRNAs such as unmethylated 5'-end-capped RNA (cap0), while it has no activity toward 2'-O-ribose methylated m7G cap (cap1). Also possesses RNA 5'-pyrophosphohydrolase activity by hydrolyzing the 5'-end triphosphate to release pyrophosphates. Stimulates exoribonuclease activity of RAT1, allowing it to degrade RNAs with stable secondary structure more effectively. Required for the processing of nuclear mRNA and rRNA precursors. May promote termination of transcription by RNA polymerase II. This is Decapping nuclease RAI1 from Saccharomyces cerevisiae (strain ATCC 204508 / S288c) (Baker's yeast).